The sequence spans 430 residues: Asparagine--tRNA ligase (430 aa).

This sequence belongs to the class-II aminoacyl-tRNA synthetase family. As to quaternary structure, homodimer.

The protein localises to the cytoplasm. It carries out the reaction tRNA(Asn) + L-asparagine + ATP = L-asparaginyl-tRNA(Asn) + AMP + diphosphate + H(+). The sequence is that of Asparagine--tRNA ligase from Staphylococcus aureus (strain bovine RF122 / ET3-1).